A 178-amino-acid polypeptide reads, in one-letter code: Glucagon-1 (178 aa).

Residues 1–21 form the signal peptide; sequence MFGIHSLAGVLLLVIVQRQLA. 3 consecutive propeptides follow at residues 83–87, 123–134, and 171–178; these read SGAPS, ESAEESRNGPMS, and SNKRQEDH.

Belongs to the glucagon family.

It localises to the secreted. Its function is as follows. Promotes hydrolysis of glycogen and lipids, and raises the blood sugar level. This Oncorhynchus mykiss (Rainbow trout) protein is Glucagon-1 (gcg1).